Consider the following 179-residue polypeptide: Adenine phosphoribosyltransferase (179 aa).

Belongs to the purine/pyrimidine phosphoribosyltransferase family. As to quaternary structure, homodimer.

The protein resides in the cytoplasm. It carries out the reaction AMP + diphosphate = 5-phospho-alpha-D-ribose 1-diphosphate + adenine. The protein operates within purine metabolism; AMP biosynthesis via salvage pathway; AMP from adenine: step 1/1. Functionally, catalyzes a salvage reaction resulting in the formation of AMP, that is energically less costly than de novo synthesis. The polypeptide is Adenine phosphoribosyltransferase (Helicobacter acinonychis (strain Sheeba)).